A 760-amino-acid polypeptide reads, in one-letter code: Photosystem I P700 chlorophyll a apoprotein A1 (760 aa).

Residues 1–22 are disordered; the sequence is MTISPPESGEKDKKILESPVKA. Positions 8–22 are enriched in basic and acidic residues; sequence SGEKDKKILESPVKA. 8 consecutive transmembrane segments (helical) span residues 76-99, 162-185, 201-225, 309-327, 368-391, 407-433, 455-477, and 551-569; these read IFSAHFGHLAVIFIWMSAAFFHGA, LMALAIGAVVMAALMLHAGIFHYH, MNHHLAGLLGLGSLAWAGHTIHIGA, IAHHHLAIAVLFIIAGHMY, RHAQLSVNLALLGSLSIIISHHMY, LGLFTHHMWIGGLFIVGAGAHAGIAMV, ALISHLNWVCMWLGFHSFGLYIH, and LMIHHIHAFQIHVTVLILL. Residues C593 and C602 each contribute to the [4Fe-4S] cluster site. The next 2 membrane-spanning stretches (helical) occupy residues 609-630 and 674-696; these read HVFLALFWMYNCLSIVIFHFSW and ISMYGLMFLGAHFIWAFSLMFLF. H685 is a divinylchlorophyll a' binding site. 2 residues coordinate divinyl chlorophyll a: M693 and Y701. A phylloquinone-binding site is contributed by W702. Residues 734–754 form a helical membrane-spanning segment; it reads AVGVTHFLVGGIATTWAFFHA.

It belongs to the PsaA/PsaB family. In terms of assembly, the PsaA/B heterodimer binds the P700 divinyl chlorophyll special pair and subsequent electron acceptors. PSI consists of a core antenna complex that captures photons, and an electron transfer chain that converts photonic excitation into a charge separation. The cyanobacterial PSI reaction center is composed of one copy each of PsaA,B,C,D,E,F,I,J,K,L,M and X, and forms trimeric complexes. PSI electron transfer chain: 5 divinyl chlorophyll a, 1 divinyl chlorophyll a', 2 phylloquinones and 3 4Fe-4S clusters. PSI core antenna: 90 divinyl chlorophyll a, 22 carotenoids, 3 phospholipids and 1 galactolipid. P700 is a divinyl chlorophyll a/divinyl chlorophyll a' dimer, A0 is one or more divinyl chlorophyll a, A1 is one or both phylloquinones and FX is a shared 4Fe-4S iron-sulfur center. is required as a cofactor.

The protein resides in the cellular thylakoid membrane. It catalyses the reaction reduced [plastocyanin] + hnu + oxidized [2Fe-2S]-[ferredoxin] = oxidized [plastocyanin] + reduced [2Fe-2S]-[ferredoxin]. PsaA and PsaB bind P700, the primary electron donor of photosystem I (PSI), as well as the electron acceptors A0, A1 and FX. PSI is a plastocyanin/cytochrome c6-ferredoxin oxidoreductase, converting photonic excitation into a charge separation, which transfers an electron from the donor P700 chlorophyll pair to the spectroscopically characterized acceptors A0, A1, FX, FA and FB in turn. Oxidized P700 is reduced on the lumenal side of the thylakoid membrane by plastocyanin or cytochrome c6. This is Photosystem I P700 chlorophyll a apoprotein A1 from Prochlorococcus marinus (strain MIT 9515).